The sequence spans 228 residues: Uracil-DNA glycosylase (228 aa).

The active-site Proton acceptor is Asp71.

The protein belongs to the uracil-DNA glycosylase (UDG) superfamily. UNG family.

It localises to the cytoplasm. The catalysed reaction is Hydrolyzes single-stranded DNA or mismatched double-stranded DNA and polynucleotides, releasing free uracil.. In terms of biological role, excises uracil residues from the DNA which can arise as a result of misincorporation of dUMP residues by DNA polymerase or due to deamination of cytosine. This chain is Uracil-DNA glycosylase, found in Thermobifida fusca (strain YX).